The primary structure comprises 262 residues: Taurine import ATP-binding protein TauB (262 aa).

One can recognise an ABC transporter domain in the interval 4 to 234 (VDHASVFFAA…RFAETGDARS (231 aa)). Position 39–46 (39–46 (GASGCGKS)) interacts with ATP.

It belongs to the ABC transporter superfamily. Taurine importer (TC 3.A.1.17.1) family. As to quaternary structure, the complex is composed of two ATP-binding proteins (TauB), two transmembrane proteins (TauC) and a solute-binding protein (TauA).

The protein resides in the cell inner membrane. The catalysed reaction is taurine(out) + ATP + H2O = taurine(in) + ADP + phosphate + H(+). Functionally, part of the ABC transporter complex TauABC involved in taurine import. Responsible for energy coupling to the transport system. The polypeptide is Taurine import ATP-binding protein TauB (Rhizobium johnstonii (strain DSM 114642 / LMG 32736 / 3841) (Rhizobium leguminosarum bv. viciae)).